The sequence spans 448 residues: N-succinylarginine dihydrolase (448 aa).

Substrate is bound by residues 19-28, N110, and 137-138; these read GGLSYGNVAS and HR. E174 is a catalytic residue. R214 contributes to the substrate binding site. H250 is a catalytic residue. D252 and N365 together coordinate substrate. The active-site Nucleophile is the C371.

It belongs to the succinylarginine dihydrolase family. Homodimer.

It carries out the reaction N(2)-succinyl-L-arginine + 2 H2O + 2 H(+) = N(2)-succinyl-L-ornithine + 2 NH4(+) + CO2. The protein operates within amino-acid degradation; L-arginine degradation via AST pathway; L-glutamate and succinate from L-arginine: step 2/5. Its function is as follows. Catalyzes the hydrolysis of N(2)-succinylarginine into N(2)-succinylornithine, ammonia and CO(2). In Pseudomonas syringae pv. syringae (strain B728a), this protein is N-succinylarginine dihydrolase.